The following is a 1175-amino-acid chain: MLEGCILADFRQSKTDRPQSSSNGSSSLNGSVPGAPNRVSFAKLREPLEVPGLLDVQIDSFEWLIGAPRWREAAIARGDAEPKGGLEEVLDELSPIEDFSGSMSLSFSDPRFDEVKAPVDECKDKDMTYAAPLFVTAEFINNNTGEIKSQTVFMGDFPMMTEKGTFIINGTERVVVSQLVRSPGVYFDETIDKSTEKTLHSVKVIPSRGAWLEFDVDKRDTVGVRIDRKRRQPVTVLLKALGWTNEQITERFGFSEIMMSTLEKDNTAGTDEALLDIYRKLRPGEPPTKESAQTLLENLFFKEKRYDLARVGRYKVNKKLGLHAGEPITSSTLTEEDVVATIEYLVRLHEGQPTMTVPGGIEVPVETDDIDHFGNRRLRTVGELIQNQIRVGMSRMERVVRERMTTQDVEAITPQTLINIRPVVAAIKEFFGTSQLSQFMDQNNPLSGLTHKRRLSALGPGGLSRERAGLEVRDVHPSHYGRMCPIETPEGPNIGLIGSLSVYARVNPFGFIETPYRKVVDGVVTDEIHYLTADEEDRHVVAQANSPIDDKGRFAEARVLVRRKAGEVEYVPSSEVDYMDVSPRQMVSVATAMIPFLEHDDANRALMGANMQRQAVPLVRSEAPLVGTGMELRAAIDAGDVVVAEKSGVIEEVSADYITVMADDGTRHTYRMRKFERSNHGTCANQSPIVDAGDRVEAGQVIADGPCTENGEMALGKNLLVAIMPWEGHNYEDAIILSNRLVEEDVLTSIHIEEHEIDARDTKLGAEEITRDIPNVSDEVLADLDERGIVRIGAEVRDGDILVGKVTPKGETELTPEERLLRAIFGEKAREVRDTSLKVPHGESGKVIGIRVFSREDDDELPAGVNELVRVYVAQKRKISDGDKLAGRHGNKGVIGKILPQEDMPFLPDGTPVDIILNTHGVPRRMNIGQILETHLGWVAKSGWNIDGNPEWAVNLPEELRHAQPNQIVSTPVFDGAKEEELAGMLSCTLPNRDGEVMVDGDGKAVLFDGRSGEPFPYPVTVGYMYIMKLHHLVDDKIHARSTGPYSMITQQPLGGKAQFGGQRFGEMECWAMQAYGAAYTLQELLTIKSDDTVGRVKVYEAIVKGENIPEPGIPESFKVLLKELQSLCLNVEVLSSDGAAIELREGEDEDLERAAANLGINLSRNESASVEDLA.

The tract at residues 12 to 33 is disordered; it reads QSKTDRPQSSSNGSSSLNGSVP. Residues 20-31 are compositionally biased toward low complexity; the sequence is SSSNGSSSLNGS.

It belongs to the RNA polymerase beta chain family. As to quaternary structure, the RNAP catalytic core consists of 2 alpha, 1 beta, 1 beta' and 1 omega subunit. When a sigma factor is associated with the core the holoenzyme is formed, which can initiate transcription.

The enzyme catalyses RNA(n) + a ribonucleoside 5'-triphosphate = RNA(n+1) + diphosphate. DNA-dependent RNA polymerase catalyzes the transcription of DNA into RNA using the four ribonucleoside triphosphates as substrates. This Mycobacterium avium (strain 104) protein is DNA-directed RNA polymerase subunit beta.